A 649-amino-acid chain; its full sequence is Probable cyclic nucleotide-gated ion channel 12 (649 aa).

The Cytoplasmic segment spans residues 1 to 43; it reads MNHRRSKFARIDSMGVDGKLKSVRGRLKKVYGKMKTLENWRKT. The helical transmembrane segment at 44–64 threads the bilayer; that stretch reads VLLACVVALAIDPLFLFIPLI. Residues 65–76 are Extracellular-facing; that stretch reads DSQRFCFTFDKT. A helical transmembrane segment spans residues 77–97; it reads LVAVVCVIRTFIDTFYVIHII. The Cytoplasmic portion of the chain corresponds to 98–128; sequence YYLITETIAPRSQASLRGEIVVHSKATLKTR. A helical transmembrane segment spans residues 129 to 149; it reads LLFHFIVDIISVLPIPQVVVL. Topologically, residues 150–162 are extracellular; it reads TLIPLSASLVSER. Residues 163-183 form a helical membrane-spanning segment; that stretch reads ILKWIILSQYVPRIIRMYPLY. At 184–200 the chain is on the cytoplasmic side; sequence KEVTRAFGTVAESKWAG. A helical transmembrane segment spans residues 201 to 221; that stretch reads AALNLFLYMLHSYVFGAFWYL. Residues 222 to 329 are Extracellular-facing; the sequence is SSIERKSKCW…QNLETSNSAG (108 aa). The chain crosses the membrane as a helical span at residues 330 to 350; the sequence is EIFFAIIICVSGLLLFAVLIG. Residues 351 to 649 are Cytoplasmic-facing; that stretch reads NVQKYLQSST…ADLEFAKAEA (299 aa). A nucleoside 3',5'-cyclic phosphate is bound by residues 436-559 and glutamate 507; that span reads LNIM…TFRL. The interval 545 to 560 is calmodulin-binding; it reads LNVFQRQKLQRTFRLY. The IQ domain maps to 565 to 594; the sequence is RSWAAFFIQAAWRKHCKRKLSKTRDNENIP. The disordered stretch occupies residues 618-649; that stretch reads RRKDTADCSSSPDMSPPVPHKPADLEFAKAEA. Positions 638-649 are enriched in basic and acidic residues; the sequence is KPADLEFAKAEA.

It belongs to the cyclic nucleotide-gated cation channel (TC 1.A.1.5) family. As to quaternary structure, homotetramer or heterotetramer.

The protein resides in the cell membrane. In terms of biological role, probable cyclic nucleotide-gated ion channel. The protein is Probable cyclic nucleotide-gated ion channel 12 (CNGC12) of Arabidopsis thaliana (Mouse-ear cress).